A 543-amino-acid chain; its full sequence is Biotinidase (543 aa).

An N-terminal signal peptide occupies residues 1 to 41 (MAHAHIQGGRRAKSRFVVCIMSGARSKLALFLCGCYVVALG). The 280-residue stretch at 72 to 351 (NPLALISRQE…VGLIGAENAT (280 aa)) folds into the CN hydrolase domain. Glu112 functions as the Proton acceptor in the catalytic mechanism. N-linked (GlcNAc...) asparagine glycosylation is present at Asn119. N-linked (GlcNAc...) (complex) asparagine glycosylation is present at Asn150. Asn203 carries N-linked (GlcNAc...) asparagine glycosylation. Catalysis depends on Lys212, which acts as the Proton donor. Cys245 acts as the Nucleophile in catalysis. Residues Asn349, Asn402, and Asn489 are each glycosylated (N-linked (GlcNAc...) asparagine).

This sequence belongs to the carbon-nitrogen hydrolase superfamily. BTD/VNN family.

It localises to the secreted. The protein resides in the extracellular space. It catalyses the reaction biocytin + H2O = biotin + L-lysine. It carries out the reaction biotin amide + H2O = biotin + NH4(+). Functionally, catalytic release of biotin from biocytin, the product of biotin-dependent carboxylases degradation. This Homo sapiens (Human) protein is Biotinidase.